A 1325-amino-acid polypeptide reads, in one-letter code: ATP-binding cassette sub-family C member 4 (1325 aa).

Residues 92–377 (YLVLGIFTLI…FFPSAIERVS (286 aa)) form the ABC transmembrane type-1 1 domain. The next 7 helical transmembrane spans lie at 93-113 (LVLG…PIFL), 136-156 (AYAT…HLYF), 207-227 (QVTV…AVTA), 228-248 (LLWM…IILL), 328-348 (SKII…VITA), 351-371 (VFVA…FFPS), and 440-460 (LLAV…AVLG). Residues 410–633 (VHVQDFTAFW…GIDFGSLLKK (224 aa)) form the ABC transporter 1 domain. 445-452 (GPVGAGKS) is a binding site for ATP. Phosphothreonine occurs at positions 646 and 648. Residues 657–667 (SSVWSQQSSRP) are compositionally biased toward low complexity. The disordered stretch occupies residues 657–688 (SSVWSQQSSRPSLKDGALESQDTENVPVTLSE). Phosphoserine is present on residues serine 664 and serine 668. Residues 710 to 730 (HWIVFIFLILLNTAAQVAYVL) traverse the membrane as a helical segment. One can recognise an ABC transmembrane type-1 2 domain in the interval 714–1005 (FIFLILLNTA…CVRQSAEVEN (292 aa)). N-linked (GlcNAc...) asparagine glycans are attached at residues asparagine 746 and asparagine 754. 6 consecutive transmembrane segments (helical) span residues 771–791 (LTVA…YVLV), 836–856 (LPLT…VVSV), 858–878 (VAVI…FIFL), 954–974 (AICA…AKTL), 977–997 (GQVG…QWCV), and 1038–1058 (EGVI…PLVL). The ABC transporter 2 domain maps to 1041–1274 (IIFDNVNFMY…KESLFYKMVQ (234 aa)). 1075–1082 (GRTGAGKS) contributes to the ATP binding site. The short motif at 1322–1325 (ETAL) is the PDZ-binding element.

Belongs to the ABC transporter superfamily. ABCC family. Conjugate transporter (TC 3.A.1.208) subfamily. Interacts (via PDZ-binding motif) with SNX27 (via PDZ domain); this interaction accelerates MRP4 internalization. Mg(2+) is required as a cofactor. Post-translationally, N-glycosylated; leading to substrate-selective effects on its transport activity. Widely expressed, with particularly high levels in prostate, but is barely detectable in liver. sinusoidal membrane of hepatocytes.

The protein localises to the basolateral cell membrane. Its subcellular location is the apical cell membrane. The catalysed reaction is ATP + H2O + xenobioticSide 1 = ADP + phosphate + xenobioticSide 2.. The enzyme catalyses an S-substituted glutathione(in) + ATP + H2O = an S-substituted glutathione(out) + ADP + phosphate + H(+). It catalyses the reaction 17beta-estradiol 17-O-(beta-D-glucuronate)(in) + ATP + H2O = 17beta-estradiol 17-O-(beta-D-glucuronate)(out) + ADP + phosphate + H(+). It carries out the reaction dehydroepiandrosterone 3-sulfate(in) + ATP + H2O = dehydroepiandrosterone 3-sulfate(out) + ADP + phosphate + H(+). The catalysed reaction is leukotriene C4(in) + ATP + H2O = leukotriene C4(out) + ADP + phosphate + H(+). The enzyme catalyses leukotriene B4(in) + ATP + H2O = leukotriene B4(out) + ADP + phosphate + H(+). It catalyses the reaction urate(in) + ATP + H2O = urate(out) + ADP + phosphate + H(+). It carries out the reaction 3',5'-cyclic GMP(in) + ATP + H2O = 3',5'-cyclic GMP(out) + ADP + phosphate + H(+). The catalysed reaction is 3',5'-cyclic AMP(in) + ATP + H2O = 3',5'-cyclic AMP(out) + ADP + phosphate + H(+). The enzyme catalyses prostaglandin E2(in) + ATP + H2O = prostaglandin E2(out) + ADP + phosphate + H(+). It catalyses the reaction prostaglandin E1(in) + ATP + H2O = prostaglandin E1(out) + ADP + phosphate + H(+). It carries out the reaction glycodeoxycholate(in) + glutathione(in) + ATP + H2O = glycodeoxycholate(out) + glutathione(out) + ADP + phosphate + H(+). The catalysed reaction is cholate(in) + glutathione(in) + ATP + H2O = cholate(out) + glutathione(out) + ADP + phosphate + H(+). The enzyme catalyses glycocholate(in) + glutathione(in) + ATP + H2O = glycocholate(out) + glutathione(out) + ADP + phosphate + H(+). It catalyses the reaction taurocholate(in) + glutathione(in) + ATP + H2O = taurocholate(out) + glutathione(out) + ADP + phosphate + H(+). It carries out the reaction glycochenodeoxycholate(in) + glutathione(in) + ATP + H2O = glycochenodeoxycholate(out) + glutathione(out) + ADP + phosphate + H(+). The catalysed reaction is taurochenodeoxycholate(in) + glutathione(in) + ATP + H2O = taurochenodeoxycholate(out) + glutathione(out) + ADP + phosphate + H(+). The enzyme catalyses glycoursodeoxycholate(in) + glutathione(in) + ATP + H2O = glycoursodeoxycholate(out) + glutathione(out) + ADP + phosphate + H(+). It catalyses the reaction tauroursodeoxycholate(in) + glutathione(in) + ATP + H2O = tauroursodeoxycholate(out) + glutathione(out) + ADP + phosphate + H(+). With respect to regulation, GSH stimulates the transport of MRP4. Urate inhibits methotrexate transport but stimulates cGMP transport. Nonsteroidal anti-inflammatory drugs (NSAIDs) strongly suppress the transport of MRP4 substrates. Functionally, ATP-dependent transporter of the ATP-binding cassette (ABC) family that actively extrudes physiological compounds and xenobiotics from cells. Transports a range of endogenous molecules that have a key role in cellular communication and signaling, including cyclic nucleotides such as cyclic AMP (cAMP) and cyclic GMP (cGMP), bile acids, steroid conjugates, urate, and prostaglandins. Mediates the ATP-dependent efflux of glutathione conjugates such as leukotriene C4 (LTC4) and leukotriene B4 (LTB4) too. The presence of GSH is necessary for the ATP-dependent transport of LTB4, whereas GSH is not required for the transport of LTC4. Mediates the cotransport of bile acids with reduced glutathione (GSH). Transports a wide range of drugs and their metabolites, including anticancer, antiviral and antibiotics molecules. Confers resistance to anticancer agents such as methotrexate. The chain is ATP-binding cassette sub-family C member 4 (ABCC4) from Homo sapiens (Human).